The sequence spans 297 residues: 4-hydroxy-tetrahydrodipicolinate synthase (297 aa).

Thr-51 contacts pyruvate. Residue Tyr-139 is the Proton donor/acceptor of the active site. Lys-167 functions as the Schiff-base intermediate with substrate in the catalytic mechanism. Val-209 is a pyruvate binding site.

Belongs to the DapA family. Homotetramer; dimer of dimers.

The protein resides in the cytoplasm. It carries out the reaction L-aspartate 4-semialdehyde + pyruvate = (2S,4S)-4-hydroxy-2,3,4,5-tetrahydrodipicolinate + H2O + H(+). It functions in the pathway amino-acid biosynthesis; L-lysine biosynthesis via DAP pathway; (S)-tetrahydrodipicolinate from L-aspartate: step 3/4. In terms of biological role, catalyzes the condensation of (S)-aspartate-beta-semialdehyde [(S)-ASA] and pyruvate to 4-hydroxy-tetrahydrodipicolinate (HTPA). The polypeptide is 4-hydroxy-tetrahydrodipicolinate synthase (Albidiferax ferrireducens (strain ATCC BAA-621 / DSM 15236 / T118) (Rhodoferax ferrireducens)).